Here is a 227-residue protein sequence, read N- to C-terminus: Cytochrome c oxidase subunit 2 (227 aa).

Residues 1–14 (MAYPFQLGLQDATS) lie on the Mitochondrial intermembrane side of the membrane. Residues 15 to 45 (PIMEELTNFHDHTLMIVFLISSLVLYLISLM) traverse the membrane as a helical segment. The Mitochondrial matrix segment spans residues 46-59 (LTTKLIHTNTMDAQ). The helical transmembrane segment at 60–87 (EVETVWTILPAIILIMIALPSLRILYLM) threads the bilayer. At 88–227 (DEINNPVLTV…LFENWSTSMI (140 aa)) the chain is on the mitochondrial intermembrane side. Residues H161, C196, E198, C200, H204, and M207 each contribute to the Cu cation site. E198 provides a ligand contact to Mg(2+).

It belongs to the cytochrome c oxidase subunit 2 family. As to quaternary structure, component of the cytochrome c oxidase (complex IV, CIV), a multisubunit enzyme composed of 14 subunits. The complex is composed of a catalytic core of 3 subunits MT-CO1, MT-CO2 and MT-CO3, encoded in the mitochondrial DNA, and 11 supernumerary subunits COX4I, COX5A, COX5B, COX6A, COX6B, COX6C, COX7A, COX7B, COX7C, COX8 and NDUFA4, which are encoded in the nuclear genome. The complex exists as a monomer or a dimer and forms supercomplexes (SCs) in the inner mitochondrial membrane with NADH-ubiquinone oxidoreductase (complex I, CI) and ubiquinol-cytochrome c oxidoreductase (cytochrome b-c1 complex, complex III, CIII), resulting in different assemblies (supercomplex SCI(1)III(2)IV(1) and megacomplex MCI(2)III(2)IV(2)). Found in a complex with TMEM177, COA6, COX18, COX20, SCO1 and SCO2. Interacts with TMEM177 in a COX20-dependent manner. Interacts with COX20. Interacts with COX16. It depends on Cu cation as a cofactor.

It localises to the mitochondrion inner membrane. It catalyses the reaction 4 Fe(II)-[cytochrome c] + O2 + 8 H(+)(in) = 4 Fe(III)-[cytochrome c] + 2 H2O + 4 H(+)(out). Its function is as follows. Component of the cytochrome c oxidase, the last enzyme in the mitochondrial electron transport chain which drives oxidative phosphorylation. The respiratory chain contains 3 multisubunit complexes succinate dehydrogenase (complex II, CII), ubiquinol-cytochrome c oxidoreductase (cytochrome b-c1 complex, complex III, CIII) and cytochrome c oxidase (complex IV, CIV), that cooperate to transfer electrons derived from NADH and succinate to molecular oxygen, creating an electrochemical gradient over the inner membrane that drives transmembrane transport and the ATP synthase. Cytochrome c oxidase is the component of the respiratory chain that catalyzes the reduction of oxygen to water. Electrons originating from reduced cytochrome c in the intermembrane space (IMS) are transferred via the dinuclear copper A center (CU(A)) of subunit 2 and heme A of subunit 1 to the active site in subunit 1, a binuclear center (BNC) formed by heme A3 and copper B (CU(B)). The BNC reduces molecular oxygen to 2 water molecules using 4 electrons from cytochrome c in the IMS and 4 protons from the mitochondrial matrix. This Gerbillurus vallinus (Brush-tailed hairy-footed gerbil) protein is Cytochrome c oxidase subunit 2 (MT-CO2).